The sequence spans 168 residues: Peptide deformylase (168 aa).

2 residues coordinate Fe cation: Cys-92 and His-134. Residue Glu-135 is part of the active site. His-138 contacts Fe cation.

The protein belongs to the polypeptide deformylase family. Requires Fe(2+) as cofactor.

It catalyses the reaction N-terminal N-formyl-L-methionyl-[peptide] + H2O = N-terminal L-methionyl-[peptide] + formate. In terms of biological role, removes the formyl group from the N-terminal Met of newly synthesized proteins. Requires at least a dipeptide for an efficient rate of reaction. N-terminal L-methionine is a prerequisite for activity but the enzyme has broad specificity at other positions. This Pseudomonas aeruginosa (strain ATCC 15692 / DSM 22644 / CIP 104116 / JCM 14847 / LMG 12228 / 1C / PRS 101 / PAO1) protein is Peptide deformylase.